The primary structure comprises 96 residues: Protein Vpr (96 aa).

A homooligomerization region spans residues 1-42 (MEQAPEDQGPQREPHNEWTLELLEEIKNEAVRHFPRVWLHQL). Ser79, Ser94, and Ser96 each carry phosphoserine; by host.

The protein belongs to the HIV-1 VPR protein family. Homooligomer, may form homodimer. Interacts with p6-gag region of the Pr55 Gag precursor protein through a (Leu-X-X)4 motif near the C-terminus of the P6gag protein. Interacts with host UNG. May interact with host RAD23A/HHR23A. Interacts with host VPRBP/DCAF1, leading to hijack the CUL4A-RBX1-DDB1-DCAF1/VPRBP complex, mediating ubiquitination of host proteins such as TERT and ZGPAT and arrest of the cell cycle in G2 phase. Post-translationally, phosphorylated on several residues by host. These phosphorylations regulate VPR activity for the nuclear import of the HIV-1 pre-integration complex.

It localises to the virion. Its subcellular location is the host nucleus. The protein resides in the host extracellular space. Its function is as follows. During virus replication, may deplete host UNG protein, and incude G2-M cell cycle arrest. Acts by targeting specific host proteins for degradation by the 26S proteasome, through association with the cellular CUL4A-DDB1 E3 ligase complex by direct interaction with host VPRPB/DCAF-1. Cell cycle arrest reportedly occurs within hours of infection and is not blocked by antiviral agents, suggesting that it is initiated by the VPR carried into the virion. Additionally, VPR induces apoptosis in a cell cycle dependent manner suggesting that these two effects are mechanistically linked. Detected in the serum and cerebrospinal fluid of AIDS patient, VPR may also induce cell death to bystander cells. In terms of biological role, during virus entry, plays a role in the transport of the viral pre-integration (PIC) complex to the host nucleus. This function is crucial for viral infection of non-dividing macrophages. May act directly at the nuclear pore complex, by binding nucleoporins phenylalanine-glycine (FG)-repeat regions. The polypeptide is Protein Vpr (Homo sapiens (Human)).